The sequence spans 336 residues: Zinc transporter ZIP11 (336 aa).

The next 7 membrane-spanning stretches (helical) occupy residues 12–32, 44–64, 75–95, 188–208, 258–278, 280–300, and 316–336; these read LLGT…VFIF, LGFA…APAI, SFAF…VYLA, IMLL…AVGV, WYGQ…TIAI, LAEP…VYVV, and LASW…VGLG.

Belongs to the ZIP transporter (TC 2.A.5) family.

The protein resides in the cell membrane. It is found in the nucleus. The protein localises to the cytoplasm. Its subcellular location is the golgi apparatus. Functions as a cellular zinc transporter. The protein is Zinc transporter ZIP11 (slc39a11) of Xenopus tropicalis (Western clawed frog).